A 509-amino-acid chain; its full sequence is Bifunctional purine biosynthesis protein PurH (509 aa).

Residues 1 to 144 (MKRALISVSD…KNYAAVTVVV (144 aa)) form the MGS-like domain.

The protein belongs to the PurH family.

The enzyme catalyses (6R)-10-formyltetrahydrofolate + 5-amino-1-(5-phospho-beta-D-ribosyl)imidazole-4-carboxamide = 5-formamido-1-(5-phospho-D-ribosyl)imidazole-4-carboxamide + (6S)-5,6,7,8-tetrahydrofolate. The catalysed reaction is IMP + H2O = 5-formamido-1-(5-phospho-D-ribosyl)imidazole-4-carboxamide. Its pathway is purine metabolism; IMP biosynthesis via de novo pathway; 5-formamido-1-(5-phospho-D-ribosyl)imidazole-4-carboxamide from 5-amino-1-(5-phospho-D-ribosyl)imidazole-4-carboxamide (10-formyl THF route): step 1/1. The protein operates within purine metabolism; IMP biosynthesis via de novo pathway; IMP from 5-formamido-1-(5-phospho-D-ribosyl)imidazole-4-carboxamide: step 1/1. This chain is Bifunctional purine biosynthesis protein PurH, found in Listeria innocua serovar 6a (strain ATCC BAA-680 / CLIP 11262).